The sequence spans 90 residues: MANIKSKIKSITKMQKARAKNNAIKSRVKTAIKKAKIAISTDASNKSDLIAKAHSEISKAKSKGVFHKNKANRKISRLNLFANTYTTPAQ.

Belongs to the bacterial ribosomal protein bS20 family.

Its function is as follows. Binds directly to 16S ribosomal RNA. The sequence is that of Small ribosomal subunit protein bS20 from Mesomycoplasma hyopneumoniae (strain J / ATCC 25934 / NCTC 10110) (Mycoplasma hyopneumoniae).